The sequence spans 178 residues: Sec-independent protein translocase protein TatB (178 aa).

Residues Met1–Gly21 traverse the membrane as a helical segment. The segment at Leu146–Ser178 is disordered. Positions Glu168–Ser178 are enriched in basic and acidic residues.

The protein belongs to the TatB family. As to quaternary structure, the Tat system comprises two distinct complexes: a TatABC complex, containing multiple copies of TatA, TatB and TatC subunits, and a separate TatA complex, containing only TatA subunits. Substrates initially bind to the TatABC complex, which probably triggers association of the separate TatA complex to form the active translocon.

It is found in the cell inner membrane. Functionally, part of the twin-arginine translocation (Tat) system that transports large folded proteins containing a characteristic twin-arginine motif in their signal peptide across membranes. Together with TatC, TatB is part of a receptor directly interacting with Tat signal peptides. TatB may form an oligomeric binding site that transiently accommodates folded Tat precursor proteins before their translocation. The sequence is that of Sec-independent protein translocase protein TatB from Bradyrhizobium sp. (strain ORS 278).